We begin with the raw amino-acid sequence, 191 residues long: Potassium-transporting ATPase KdpC subunit (191 aa).

Residues 10 to 30 form a helical membrane-spanning segment; sequence ITLVFCVFFSVFYILVLWLFA.

Belongs to the KdpC family. In terms of assembly, the system is composed of three essential subunits: KdpA, KdpB and KdpC.

It localises to the cell inner membrane. Its function is as follows. Part of the high-affinity ATP-driven potassium transport (or Kdp) system, which catalyzes the hydrolysis of ATP coupled with the electrogenic transport of potassium into the cytoplasm. This subunit acts as a catalytic chaperone that increases the ATP-binding affinity of the ATP-hydrolyzing subunit KdpB by the formation of a transient KdpB/KdpC/ATP ternary complex. This Bacteroides fragilis (strain YCH46) protein is Potassium-transporting ATPase KdpC subunit.